A 245-amino-acid chain; its full sequence is D-aminoacyl-tRNA deacylase (245 aa).

The protein belongs to the DtdA deacylase family. In terms of assembly, monomer. Zn(2+) is required as a cofactor.

It carries out the reaction a D-aminoacyl-tRNA + H2O = a tRNA + a D-alpha-amino acid + H(+). The catalysed reaction is glycyl-tRNA(Ala) + H2O = tRNA(Ala) + glycine + H(+). D-aminoacyl-tRNA deacylase with broad substrate specificity. By recycling D-aminoacyl-tRNA to D-amino acids and free tRNA molecules, this enzyme counteracts the toxicity associated with the formation of D-aminoacyl-tRNA entities in vivo. The protein is D-aminoacyl-tRNA deacylase of Ignicoccus hospitalis (strain KIN4/I / DSM 18386 / JCM 14125).